Reading from the N-terminus, the 556-residue chain is Polypeptide N-acetylgalactosaminyltransferase 13 (556 aa).

At Met1 to Leu4 the chain is on the cytoplasmic side. Residues Val5–Tyr27 form a helical; Signal-anchor for type II membrane protein membrane-spanning segment. Residues Phe28–Thr556 lie on the Lumenal side of the membrane. Asn94 and Asn116 each carry an N-linked (GlcNAc...) asparagine glycan. 5 cysteine pairs are disulfide-bonded: Cys105–Cys338, Cys329–Cys407, Cys441–Cys458, Cys481–Cys496, and Cys522–Cys539. The tract at residues Leu114–Arg224 is catalytic subdomain A. Substrate-binding residues include Asp155 and Arg185. Residues Asp208 and His210 each coordinate Mn(2+). The interval Pro284 to Arg346 is catalytic subdomain B. Trp315 serves as a coordination point for substrate. His343 is a binding site for Mn(2+). Positions 346 and 351 each coordinate substrate. The Ricin B-type lectin domain occupies Tyr428–Arg550. Asn551 carries an N-linked (GlcNAc...) asparagine glycan.

This sequence belongs to the glycosyltransferase 2 family. GalNAc-T subfamily. Mn(2+) serves as cofactor.

It is found in the golgi apparatus membrane. It catalyses the reaction L-seryl-[protein] + UDP-N-acetyl-alpha-D-galactosamine = a 3-O-[N-acetyl-alpha-D-galactosaminyl]-L-seryl-[protein] + UDP + H(+). The enzyme catalyses L-threonyl-[protein] + UDP-N-acetyl-alpha-D-galactosamine = a 3-O-[N-acetyl-alpha-D-galactosaminyl]-L-threonyl-[protein] + UDP + H(+). Its pathway is protein modification; protein glycosylation. In terms of biological role, catalyzes the initial reaction in O-linked oligosaccharide biosynthesis, the transfer of an N-acetyl-D-galactosamine (GalNAc) residue from UDP-GalNAc to a serine or threonine residue on the protein receptor. Generates GalNAc-O-Ser/Thr structure also known as Tn antigen, which itself is immunogenic but also serves as a precursor for the synthesis of different mucin-type O-glycan core structures. Contributes to the synthesis of O-linked glycans on mucins and proteoglycans of the central nervous system. Can glycosylate both unmodified peptides and glycopeptides that already contain an O-linked GalNAc sugar. Transfers GalNAc to Thr-/Ser-rich tandem repeats GTTPSPVPTTSTTSAP of MUC5AC. Transfers GalNAc to three consecutive serine/threonine residues on SDC3 forming a triplet-Tn epitope expressed in Purkinje cells of the developing brain. May promote neurogenesis through glycosylation and stabilization of PDPN. The protein is Polypeptide N-acetylgalactosaminyltransferase 13 (Galnt13) of Rattus norvegicus (Rat).